The chain runs to 258 residues: Hydroxyacylglutathione hydrolase (258 aa).

Zn(2+) contacts are provided by H56, H58, D60, H61, H112, D132, and H170.

Belongs to the metallo-beta-lactamase superfamily. Glyoxalase II family. As to quaternary structure, monomer. Requires Zn(2+) as cofactor.

The catalysed reaction is an S-(2-hydroxyacyl)glutathione + H2O = a 2-hydroxy carboxylate + glutathione + H(+). It participates in secondary metabolite metabolism; methylglyoxal degradation; (R)-lactate from methylglyoxal: step 2/2. In terms of biological role, thiolesterase that catalyzes the hydrolysis of S-D-lactoyl-glutathione to form glutathione and D-lactic acid. The protein is Hydroxyacylglutathione hydrolase of Pseudomonas aeruginosa (strain ATCC 15692 / DSM 22644 / CIP 104116 / JCM 14847 / LMG 12228 / 1C / PRS 101 / PAO1).